The chain runs to 162 residues: Interleukin-15 (162 aa).

An N-terminal signal peptide occupies residues 1–29; it reads MRISKPYLRSTSIQCYLCLLLNSHFLAEA. Positions 30-48 are excised as a propeptide; that stretch reads GIHVFIFGCISAGLPKTEA. Intrachain disulfides connect Cys-83–Cys-133 and Cys-90–Cys-136. Asn-108, Asn-119, Asn-127, and Asn-143 each carry an N-linked (GlcNAc...) asparagine glycan.

This sequence belongs to the IL-15/IL-21 family. In terms of tissue distribution, expressed in many tissues including heart, spleen, lung, liver, muscle and kidney (at mRNA level). Expressed in many tissues including heart, spleen, lung, liver, muscle and kidney (at protein level).

It localises to the secreted. Its function is as follows. Cytokine that plays a major role in the development of inflammatory and protective immune responses to microbial invaders and parasites by modulating immune cells of both the innate and adaptive immune systems. Stimulates the proliferation of natural killer cells, T-cells and B-cells and promotes the secretion of several cytokines. In monocytes, induces the production of IL8 and monocyte chemotactic protein 1/CCL2, two chemokines that attract neutrophils and monocytes respectively to sites of infection. Unlike most cytokines, which are secreted in soluble form, IL15 is expressed in association with its high affinity IL15RA on the surface of IL15-producing cells and delivers signals to target cells that express IL2RB and IL2RG receptor subunits. Binding to its receptor triggers the phosphorylation of JAK1 and JAK3 and the recruitment and subsequent phosphorylation of signal transducer and activator of transcription-3/STAT3 and STAT5. In mast cells, induces the rapid tyrosine phosphorylation of STAT6 and thereby controls mast cell survival and release of cytokines such as IL4. This Oryctolagus cuniculus (Rabbit) protein is Interleukin-15 (IL15).